The sequence spans 105 residues: Large ribosomal subunit protein uL24 (105 aa).

This sequence belongs to the universal ribosomal protein uL24 family. In terms of assembly, part of the 50S ribosomal subunit.

Its function is as follows. One of two assembly initiator proteins, it binds directly to the 5'-end of the 23S rRNA, where it nucleates assembly of the 50S subunit. One of the proteins that surrounds the polypeptide exit tunnel on the outside of the subunit. In Francisella tularensis subsp. novicida (strain U112), this protein is Large ribosomal subunit protein uL24.